The primary structure comprises 215 residues: MSKGFFVDTTRCTACRGCQVACKQWHGNPATPTENTGFHQNPPDFNFHTYKLVRMHEQEIDGRIDWLFFPDQCRHCIAPPCKATADMEDESAIIHDDATGCVLFTPKTKDLEDYESVISACPYDVPRKVAESNQMAKCDMCIDRITNGLRPACVTSCPTGAMNFGDLSEMEAMASARLAEIKAAYSDAKLCDPDDVRVIFLTAHNPKLYHEYAVA.

Residues 3-32 form the 4Fe-4S ferredoxin-type 1 domain; sequence KGFFVDTTRCTACRGCQVACKQWHGNPATP. The [4Fe-4S] cluster site is built by Cys12, Cys15, Cys18, Cys22, Cys73, Cys76, Cys81, Cys121, Cys138, Cys141, Cys153, and Cys157. The 40-residue stretch at 129–168 folds into the 4Fe-4S ferredoxin-type 2 domain; that stretch reads VAESNQMAKCDMCIDRITNGLRPACVTSCPTGAMNFGDLS.

In terms of assembly, heterodimer of alpha (FdhA) and beta (FdhB) subunits. It depends on [4Fe-4S] cluster as a cofactor.

The protein localises to the periplasm. In terms of biological role, beta chain of the formate dehydrogenase (FDH) catalyzes the reversible two-electron oxidation of formate to carbon dioxide. FDH loses activity in the presence of air, but this activity can be restored. This chain is an electron transfer unit. The polypeptide is Formate dehydrogenase subunit beta (Megalodesulfovibrio gigas (strain ATCC 19364 / DSM 1382 / NCIMB 9332 / VKM B-1759) (Desulfovibrio gigas)).